Consider the following 197-residue polypeptide: Phosphoheptose isomerase (197 aa).

An SIS domain is found at 40 to 197 (CIASIAQGGK…LVEHSIFGKQ (158 aa)). Substrate is bound at residue 55 to 57 (NGG). Zn(2+) is bound by residues histidine 64 and glutamate 68. Substrate contacts are provided by residues glutamate 68, 97–98 (ND), 123–125 (STS), serine 128, and glutamine 175. Glutamine 175 and histidine 183 together coordinate Zn(2+).

It belongs to the SIS family. GmhA subfamily. Homotetramer. The cofactor is Zn(2+).

It localises to the cytoplasm. The catalysed reaction is 2 D-sedoheptulose 7-phosphate = D-glycero-alpha-D-manno-heptose 7-phosphate + D-glycero-beta-D-manno-heptose 7-phosphate. Its pathway is carbohydrate biosynthesis; D-glycero-D-manno-heptose 7-phosphate biosynthesis; D-glycero-alpha-D-manno-heptose 7-phosphate and D-glycero-beta-D-manno-heptose 7-phosphate from sedoheptulose 7-phosphate: step 1/1. It functions in the pathway capsule biogenesis; capsule polysaccharide biosynthesis. In terms of biological role, catalyzes the isomerization of sedoheptulose 7-phosphate in D-glycero-D-manno-heptose 7-phosphate. This chain is Phosphoheptose isomerase (gmhA), found in Burkholderia pseudomallei (strain K96243).